We begin with the raw amino-acid sequence, 241 residues long: Co-chaperone protein p23-1 (241 aa).

The 90-residue stretch at 2–91 folds into the CS domain; it reads SRHPEVKWAE…AEPERWNKLL (90 aa). MGG repeat units follow at residues 129–131, 132–134, 135–137, 138–140, 141–143, 144–146, 147–149, 150–152, 162–164, 165–167, 168–170, 171–173, 180–182, 183–185, 186–188, 189–191, and 192–194; these read MGG. The segment at 129 to 194 is 17 X 3 AA repeats of M-G-G; that stretch reads MGGMGGMGGM…GMGGMGGMGG (66 aa). The interval 188 to 241 is disordered; sequence GMGGMGGMEEFEDSDDEEETAKSGDKKDDAVKEEGLATEKAPAAEETTSVKEDK. Over residues 196-206 the composition is skewed to acidic residues; it reads EEFEDSDDEEE. A compositionally biased stretch (basic and acidic residues) spans 207-224; the sequence is TAKSGDKKDDAVKEEGLA. The span at 225 to 234 shows a compositional bias: low complexity; sequence TEKAPAAEET.

It belongs to the p23/wos2 family. In terms of assembly, interacts with HSP90 in an ATP-dependent manner. Interacts with HSP90-5, HSP90-6 and HSP90-7. As to expression, widely expressed but preferentially in the root meristem.

Its subcellular location is the cytoplasm. It is found in the nucleus. Acts as a co-chaperone for HSP90. Controls root development through the modulation of auxin distribution in the root meristem. This is Co-chaperone protein p23-1 from Arabidopsis thaliana (Mouse-ear cress).